Here is a 315-residue protein sequence, read N- to C-terminus: Diacylglycerol kinase (315 aa).

The 132-residue stretch at 1-132 (MRKRARIIYN…VDIGKMNNRY (132 aa)) folds into the DAGKc domain. Residues 10–14 (NPTSG), Thr-41, 67–73 (GDGTLNE), and Thr-94 each bind ATP. Lys-213, Asp-216, and Tyr-218 together coordinate Mg(2+). Catalysis depends on Glu-273, which acts as the Proton acceptor.

It belongs to the diacylglycerol/lipid kinase family. Homodimer. Requires Mg(2+) as cofactor.

The enzyme catalyses a 1,2-diacyl-sn-glycerol + ATP = a 1,2-diacyl-sn-glycero-3-phosphate + ADP + H(+). Catalyzes the phosphorylation of diacylglycerol (DAG) into phosphatidic acid. Is a key enzyme involved in the production of lipoteichoic acid by reintroducing DAG formed from the breakdown of membrane phospholipids into the phosphatidylglycerol biosynthetic pathway. This Staphylococcus aureus (strain USA300 / TCH1516) protein is Diacylglycerol kinase (dagK).